A 234-amino-acid chain; its full sequence is Inner membrane protein YbhL (234 aa).

At 1–23 (MDRFPRSDSIVQPRAGLQTYMAQ) the chain is on the periplasmic side. A helical membrane pass occupies residues 24 to 44 (VYGWMTVGLLLTAFVAWYAAN). At 45–56 (SAAVMELLFTNR) the chain is on the cytoplasmic side. Residues 57–77 (VFLIGLIIAQLALVIVLSAMI) form a helical membrane-spanning segment. Topologically, residues 78 to 79 (QK) are periplasmic. The helical transmembrane segment at 80–100 (LSAGVTTMLFMLYSALTGLTL) threads the bilayer. The Cytoplasmic portion of the chain corresponds to 101 to 102 (SS). A helical membrane pass occupies residues 103 to 123 (IFIVYTAASIASTFVVTAGMF). Topologically, residues 124-136 (GAMSLYGYTTKRD) are periplasmic. Residues 137–157 (LSGFGNMLFMALIGIVLASLV) form a helical membrane-spanning segment. Topologically, residues 158–163 (NFWLKS) are cytoplasmic. The helical transmembrane segment at 164–184 (EALMWAVTYIGVIVFVGLTAY) threads the bilayer. The Periplasmic portion of the chain corresponds to 185 to 206 (DTQKLKNMGEQIDTRDTSNLRK). The helical transmembrane segment at 207-227 (YSILGALTLYLDFINLFLMLL) threads the bilayer. Residues 228 to 234 (RIFGNRR) lie on the Cytoplasmic side of the membrane.

It belongs to the BI1 family.

Its subcellular location is the cell inner membrane. The chain is Inner membrane protein YbhL (ybhL) from Escherichia coli (strain K12).